A 113-amino-acid chain; its full sequence is uncharacterized protein (113 aa).

It to H.pylori HP0245/JHP0230.

This is an uncharacterized protein from Campylobacter jejuni subsp. jejuni serotype O:2 (strain ATCC 700819 / NCTC 11168).